Here is a 359-residue protein sequence, read N- to C-terminus: 3-dehydroquinate synthase (359 aa).

Residues Asp-71–Lys-76, Gly-105–Asp-109, Thr-129–Thr-130, Lys-142, Lys-151, and Cys-169–Thr-172 each bind NAD(+). Glu-184, His-247, and His-264 together coordinate Zn(2+).

The protein belongs to the sugar phosphate cyclases superfamily. Dehydroquinate synthase family. Co(2+) is required as a cofactor. Requires Zn(2+) as cofactor. NAD(+) serves as cofactor.

The protein resides in the cytoplasm. It catalyses the reaction 7-phospho-2-dehydro-3-deoxy-D-arabino-heptonate = 3-dehydroquinate + phosphate. Its pathway is metabolic intermediate biosynthesis; chorismate biosynthesis; chorismate from D-erythrose 4-phosphate and phosphoenolpyruvate: step 2/7. In terms of biological role, catalyzes the conversion of 3-deoxy-D-arabino-heptulosonate 7-phosphate (DAHP) to dehydroquinate (DHQ). This is 3-dehydroquinate synthase from Shewanella sp. (strain W3-18-1).